The primary structure comprises 181 residues: Peptide deformylase (181 aa).

Residues C103 and H145 each coordinate Fe cation. Residue E146 is part of the active site. H149 contributes to the Fe cation binding site.

The protein belongs to the polypeptide deformylase family. Requires Fe(2+) as cofactor.

The enzyme catalyses N-terminal N-formyl-L-methionyl-[peptide] + H2O = N-terminal L-methionyl-[peptide] + formate. Functionally, removes the formyl group from the N-terminal Met of newly synthesized proteins. Requires at least a dipeptide for an efficient rate of reaction. N-terminal L-methionine is a prerequisite for activity but the enzyme has broad specificity at other positions. The polypeptide is Peptide deformylase (Orientia tsutsugamushi (strain Boryong) (Rickettsia tsutsugamushi)).